The sequence spans 365 residues: MFRLLRWRLGRTLLRAAGRRCGGCTARLLPERAGDAGPGAERLRTRGAPARGHRVLPLLAALAWFSRTAAAEEQPGEDATDEAEAEIIQLLKRAKLSIMKDEPEAAELILHDALRLAYESDNKKAITYTYDLMANLAFIRGQLENAEQLFKATMSYLLGGGMKQEDNAIVEISLKLANIYAAQNKQEFALAGYEFCISTLEGKIEREKELAEDIMSEERANTYLLLGMCLDSCARYLLFSKQLSQAQRMYEKALQICQEIQGERHPQTIVLMSDLATALDAQGHFDDAYIYMQRASDLAREINHPELHMVLSNLAAILIHRERYTQAKEIYQEALKQAELKRDEFSVQHIREELAELSRKSRLLT.

A mitochondrion-targeting transit peptide spans 1–52 (MFRLLRWRLGRTLLRAAGRRCGGCTARLLPERAGDAGPGAERLRTRGAPARG). TPR repeat units lie at residues 127–160 (TYTY…LLGG), 170–203 (VEIS…LEGK), 220–260 (ANTY…CQEI), 269–302 (IVLM…AREI), and 308–341 (HMVL…AELK).

This sequence belongs to the TTC19 family. As to quaternary structure, binds to the mature mitochondrial complex III dimer, after the incorporation of the Rieske protein UQCRFS1. Interacts with UQCRC1 and UQCRFS1. Interacts with ZFYVE26 and CHMP4B. Post-translationally, proteolytically cleaved by PARL.

The protein resides in the mitochondrion inner membrane. Functionally, required for the preservation of the structural and functional integrity of mitochondrial respiratory complex III by allowing the physiological turnover of the Rieske protein UQCRFS1. Involved in the clearance of UQCRFS1 N-terminal fragments, which are produced upon incorporation into the complex III and whose presence is detrimental for its catalytic activity. The chain is Tetratricopeptide repeat protein 19, mitochondrial (Ttc19) from Rattus norvegicus (Rat).